Reading from the N-terminus, the 211-residue chain is Thiamine-phosphate synthase (211 aa).

4-amino-2-methyl-5-(diphosphooxymethyl)pyrimidine contacts are provided by residues 37–41 and N69; that span reads QLRIK. D70 and D89 together coordinate Mg(2+). A 4-amino-2-methyl-5-(diphosphooxymethyl)pyrimidine-binding site is contributed by S108. 134 to 136 is a binding site for 2-[(2R,5Z)-2-carboxy-4-methylthiazol-5(2H)-ylidene]ethyl phosphate; the sequence is TQT. K137 provides a ligand contact to 4-amino-2-methyl-5-(diphosphooxymethyl)pyrimidine. Residues G166 and 186 to 187 each bind 2-[(2R,5Z)-2-carboxy-4-methylthiazol-5(2H)-ylidene]ethyl phosphate; that span reads VS.

Belongs to the thiamine-phosphate synthase family. Mg(2+) is required as a cofactor.

The enzyme catalyses 2-[(2R,5Z)-2-carboxy-4-methylthiazol-5(2H)-ylidene]ethyl phosphate + 4-amino-2-methyl-5-(diphosphooxymethyl)pyrimidine + 2 H(+) = thiamine phosphate + CO2 + diphosphate. It carries out the reaction 2-(2-carboxy-4-methylthiazol-5-yl)ethyl phosphate + 4-amino-2-methyl-5-(diphosphooxymethyl)pyrimidine + 2 H(+) = thiamine phosphate + CO2 + diphosphate. It catalyses the reaction 4-methyl-5-(2-phosphooxyethyl)-thiazole + 4-amino-2-methyl-5-(diphosphooxymethyl)pyrimidine + H(+) = thiamine phosphate + diphosphate. Its pathway is cofactor biosynthesis; thiamine diphosphate biosynthesis; thiamine phosphate from 4-amino-2-methyl-5-diphosphomethylpyrimidine and 4-methyl-5-(2-phosphoethyl)-thiazole: step 1/1. In terms of biological role, condenses 4-methyl-5-(beta-hydroxyethyl)thiazole monophosphate (THZ-P) and 2-methyl-4-amino-5-hydroxymethyl pyrimidine pyrophosphate (HMP-PP) to form thiamine monophosphate (TMP). This Shigella sonnei (strain Ss046) protein is Thiamine-phosphate synthase.